The sequence spans 253 residues: Sulfate transporter CysZ (253 aa).

A run of 4 helical transmembrane segments spans residues 31–51 (FVIL…WWLF), 72–92 (LSYL…GYFF), 151–171 (IVLL…PVLW), and 222–242 (IPVL…AMWV).

It belongs to the CysZ family.

The protein resides in the cell inner membrane. In terms of biological role, high affinity, high specificity proton-dependent sulfate transporter, which mediates sulfate uptake. Provides the sulfur source for the cysteine synthesis pathway. The chain is Sulfate transporter CysZ from Salmonella paratyphi A (strain AKU_12601).